A 196-amino-acid polypeptide reads, in one-letter code: UMP-CMP kinase (196 aa).

Residue 13-18 (GAGKGT) coordinates ATP. A Phosphoserine modification is found at S33. Residues 33 to 63 (SAGELLRDERKNPDSQYGELIEKYIKDGKIV) form an NMP region. R39 serves as a coordination point for a ribonucleoside 5'-phosphate. N6-acetyllysine occurs at positions 43 and 55. A ribonucleoside 5'-phosphate contacts are provided by residues 61 to 63 (KIV) and 93 to 96 (GFPR). Residue N100 coordinates CMP. N6-succinyllysine is present on K106. Residues 133–143 (ERGKSSGRSDD) form an LID region. R134 is a binding site for ATP. R140 and R151 together coordinate a ribonucleoside 5'-phosphate. ATP is bound at residue K179. Phosphoserine is present on S180.

This sequence belongs to the adenylate kinase family. UMP-CMP kinase subfamily. In terms of assembly, monomer. The cofactor is Mg(2+).

The protein localises to the nucleus. The protein resides in the cytoplasm. The catalysed reaction is CMP + ATP = CDP + ADP. It carries out the reaction dCMP + ATP = dCDP + ADP. It catalyses the reaction UMP + ATP = UDP + ADP. The enzyme catalyses a 2'-deoxyribonucleoside 5'-diphosphate + ATP = a 2'-deoxyribonucleoside 5'-triphosphate + ADP. The catalysed reaction is a ribonucleoside 5'-diphosphate + ATP = a ribonucleoside 5'-triphosphate + ADP. Functionally, catalyzes the phosphorylation of pyrimidine nucleoside monophosphates at the expense of ATP. Plays an important role in de novo pyrimidine nucleotide biosynthesis. Has preference for UMP and CMP as phosphate acceptors. Also displays broad nucleoside diphosphate kinase activity. In Sus scrofa (Pig), this protein is UMP-CMP kinase.